A 200-amino-acid chain; its full sequence is Probable fatty acid desaturase MIMI_L630 (200 aa).

2 consecutive transmembrane segments (helical) span residues 9–29 (FIQI…YHWI) and 79–99 (IGPL…FIMI).

Belongs to the fatty acid desaturase CarF family.

Its subcellular location is the membrane. The polypeptide is Probable fatty acid desaturase MIMI_L630 (Acanthamoeba polyphaga mimivirus (APMV)).